A 231-amino-acid polypeptide reads, in one-letter code: Ribonuclease 3 (231 aa).

The 130-residue stretch at 5-134 (QKKLKNDYGL…FLGALFIDQG (130 aa)) folds into the RNase III domain. Glutamate 47 is a Mg(2+) binding site. Aspartate 51 is a catalytic residue. Residues asparagine 120 and glutamate 123 each coordinate Mg(2+). Residue glutamate 123 is part of the active site. Residues 160–229 (DYKTELQEVL…AENAIKGQNH (70 aa)) enclose the DRBM domain.

The protein belongs to the ribonuclease III family. As to quaternary structure, homodimer. Mg(2+) is required as a cofactor.

The protein resides in the cytoplasm. The enzyme catalyses Endonucleolytic cleavage to 5'-phosphomonoester.. In terms of biological role, digests double-stranded RNA. Involved in the processing of primary rRNA transcript to yield the immediate precursors to the large and small rRNAs (23S and 16S). Processes some mRNAs, and tRNAs when they are encoded in the rRNA operon. Processes pre-crRNA and tracrRNA of type II CRISPR loci if present in the organism. This is Ribonuclease 3 from Lactococcus lactis subsp. lactis (strain IL1403) (Streptococcus lactis).